Reading from the N-terminus, the 111-residue chain is Probable 4-amino-4-deoxy-L-arabinose-phosphoundecaprenol flippase subunit ArnE (111 aa).

Residues 1 to 35 (MIWLTLVFASLLSVAGQLCQKQATCFAAVNKRRKH) are Cytoplasmic-facing. A helical membrane pass occupies residues 36-56 (IVLWLGLALACLGLAMVLWLL). One can recognise an EamA domain in the interval 40–109 (LGLALACLGL…IIGGIVILGS (70 aa)). Over 57-60 (VLQN) the chain is Periplasmic. A helical transmembrane segment spans residues 61–81 (VPVGIAYPMLSLNFVWVTLAA). Over 82–87 (VKLWHE) the chain is Cytoplasmic. Residues 88–108 (PVSLRHWCGVAFIIGGIVILG) traverse the membrane as a helical segment. Topologically, residues 109 to 111 (STV) are periplasmic.

The protein belongs to the ArnE family. Heterodimer of ArnE and ArnF.

The protein localises to the cell inner membrane. It functions in the pathway bacterial outer membrane biogenesis; lipopolysaccharide biosynthesis. Its function is as follows. Translocates 4-amino-4-deoxy-L-arabinose-phosphoundecaprenol (alpha-L-Ara4N-phosphoundecaprenol) from the cytoplasmic to the periplasmic side of the inner membrane. This is Probable 4-amino-4-deoxy-L-arabinose-phosphoundecaprenol flippase subunit ArnE from Escherichia coli (strain UTI89 / UPEC).